A 544-amino-acid chain; its full sequence is Probable protein kinase UbiB (544 aa).

The region spanning 123 to 501 (DFDIEPLASA…KRQQATGKFL (379 aa)) is the Protein kinase domain. Residues 129–137 (LASASIAQV) and Lys-152 contribute to the ATP site. The active-site Proton acceptor is the Asp-287. Residues 500 to 520 (FLFGVGATLVVCSAILVSSPY) form a helical membrane-spanning segment.

It belongs to the ABC1 family. UbiB subfamily.

The protein resides in the cell inner membrane. It participates in cofactor biosynthesis; ubiquinone biosynthesis [regulation]. In terms of biological role, is probably a protein kinase regulator of UbiI activity which is involved in aerobic coenzyme Q (ubiquinone) biosynthesis. The protein is Probable protein kinase UbiB of Vibrio atlanticus (strain LGP32) (Vibrio splendidus (strain Mel32)).